The chain runs to 143 residues: Peptide methionine sulfoxide reductase MsrB (143 aa).

Residues 16–139 (DAELRRRLTP…NSAALNFEAK (124 aa)) form the MsrB domain. The Zn(2+) site is built by cysteine 55, cysteine 58, cysteine 104, and cysteine 107. Cysteine 128 serves as the catalytic Nucleophile.

Belongs to the MsrB Met sulfoxide reductase family. Requires Zn(2+) as cofactor.

The enzyme catalyses L-methionyl-[protein] + [thioredoxin]-disulfide + H2O = L-methionyl-(R)-S-oxide-[protein] + [thioredoxin]-dithiol. This chain is Peptide methionine sulfoxide reductase MsrB, found in Burkholderia pseudomallei (strain 1710b).